Consider the following 219-residue polypeptide: GTP-binding protein drn-1 (219 aa).

Residues 37 to 44 (GAGGVGKS), 56 to 62 (NENYVPT), 85 to 89 (DTTGS), 146 to 149 (NKKD), and 177 to 178 (AK) contribute to the GTP site. The Effector region motif lies at 59-67 (YVPTIEDTY). Position 216 is a cysteine methyl ester (Cys-216). Cys-216 carries S-geranylgeranyl cysteine lipidation. A propeptide spans 217–219 (HIM) (removed in mature form).

Belongs to the small GTPase superfamily. Di-Ras family. Interacts with epac-1 (via C-terminus). As to expression, expressed specifically in neurons including the nerve ring, ventral and dorsal nerve cord motor neurons and tail ganglia.

Its subcellular location is the cell membrane. Its function is as follows. Displays low GTPase activity and exists predominantly in the GTP-bound form. Together with epac-1, may regulate acetylcholine release at the neuromuscular junctions probably downstream of G-protein gsa-1 and adenylate cyclase acy-1. This Caenorhabditis elegans protein is GTP-binding protein drn-1.